Reading from the N-terminus, the 361-residue chain is Diacylglycerol O-acyltransferase 2 (361 aa).

Over 1-42 (MKTLIAAYSGVLRGTGSSILSALQDLFSVTWLNRAKVEKQLQ) the chain is Cytoplasmic. The helical transmembrane segment at 43–61 (VISVLQWVLSFLVLGVACS) threads the bilayer. Residues 62–65 (VILM) are Lumenal-facing. Residues 66 to 85 (YTFCTDCWLIAVLYFTWLVF) form a helical membrane-spanning segment. Residues 86–361 (DWNTPKKGGR…LPETEVLEVN (276 aa)) are Cytoplasmic-facing.

The protein belongs to the diacylglycerol acyltransferase family. In terms of assembly, forms multimeric complexes consisting of several DGAT2 subunits. Interacts with SLC27A1 and this interaction is enhanced in the presence of ZFYVE1.

It is found in the endoplasmic reticulum membrane. Its subcellular location is the lipid droplet. The protein resides in the cytoplasm. The protein localises to the perinuclear region. The catalysed reaction is an acyl-CoA + a 1,2-diacyl-sn-glycerol = a triacyl-sn-glycerol + CoA. It carries out the reaction all-trans-retinol + an acyl-CoA = an all-trans-retinyl ester + CoA. It catalyses the reaction 2-(9Z-octadecenoyl)-glycerol + (9Z)-octadecenoyl-CoA = 1,2-di-(9Z-octadecenoyl)-sn-glycerol + CoA. The enzyme catalyses 1,2-di-(9Z-octadecenoyl)-sn-glycerol + (9Z)-octadecenoyl-CoA = 1,2,3-tri-(9Z-octadecenoyl)-glycerol + CoA. The catalysed reaction is all-trans-retinol + hexadecanoyl-CoA = all-trans-retinyl hexadecanoate + CoA. It carries out the reaction 1-O-(9Z-octadecenyl)-glycerol + (9Z)-octadecenoyl-CoA = 1-O-(9Z-octadecyl)-3-(9Z-octadecenoyl)-glycerol + CoA. It catalyses the reaction 1-(9Z-octadecenoyl)-glycerol + (9Z)-octadecenoyl-CoA = 1,2-di-(9Z-octadecenoyl)-glycerol + CoA. The enzyme catalyses 1,2-di-(9Z-octadecenoyl)-sn-glycerol + hexadecanoyl-CoA = 1,2-di-(9Z)-octadecenoyl-3-hexadecanoyl-sn-glycerol + CoA. The catalysed reaction is 1,3-di-(9Z-octadecenoyl)-glycerol + (9Z)-octadecenoyl-CoA = 1,2,3-tri-(9Z-octadecenoyl)-glycerol + CoA. It carries out the reaction 2,3-di-(9Z)-octadecenoyl-sn-glycerol + (9Z)-octadecenoyl-CoA = 1,2,3-tri-(9Z-octadecenoyl)-glycerol + CoA. It catalyses the reaction 2-(9Z-octadecenoyl)-glycerol + hexadecanoyl-CoA = 1-hexadecanoyl-2-(9Z-octadecenoyl)-sn-glycerol + CoA. It functions in the pathway glycerolipid metabolism; triacylglycerol biosynthesis. Inhibited by niacin. In terms of biological role, essential acyltransferase that catalyzes the terminal and only committed step in triacylglycerol synthesis by using diacylglycerol and fatty acyl CoA as substrates. Required for synthesis and storage of intracellular triglycerides. Probably plays a central role in cytosolic lipid accumulation. In liver, is primarily responsible for incorporating endogenously synthesized fatty acids into triglycerides. Also functions as an acyl-CoA retinol acyltransferase (ARAT). Also able to use 1-monoalkylglycerol (1-MAkG) as an acyl acceptor for the synthesis of monoalkyl-monoacylglycerol (MAMAG). The polypeptide is Diacylglycerol O-acyltransferase 2 (DGAT2) (Bos taurus (Bovine)).